The following is a 415-amino-acid chain: Serine hydroxymethyltransferase 1 (415 aa).

(6S)-5,6,7,8-tetrahydrofolate is bound by residues Leu-122 and 126–128; that span reads GHL. At Lys-230 the chain carries N6-(pyridoxal phosphate)lysine.

The protein belongs to the SHMT family. As to quaternary structure, homodimer. Pyridoxal 5'-phosphate is required as a cofactor.

The protein localises to the cytoplasm. The enzyme catalyses (6R)-5,10-methylene-5,6,7,8-tetrahydrofolate + glycine + H2O = (6S)-5,6,7,8-tetrahydrofolate + L-serine. It participates in one-carbon metabolism; tetrahydrofolate interconversion. The protein operates within amino-acid biosynthesis; glycine biosynthesis; glycine from L-serine: step 1/1. Its function is as follows. Catalyzes the reversible interconversion of serine and glycine with tetrahydrofolate (THF) serving as the one-carbon carrier. This reaction serves as the major source of one-carbon groups required for the biosynthesis of purines, thymidylate, methionine, and other important biomolecules. Also exhibits THF-independent aldolase activity toward beta-hydroxyamino acids, producing glycine and aldehydes, via a retro-aldol mechanism. This is Serine hydroxymethyltransferase 1 from Cupriavidus pinatubonensis (strain JMP 134 / LMG 1197) (Cupriavidus necator (strain JMP 134)).